Consider the following 391-residue polypeptide: Formate-dependent phosphoribosylglycinamide formyltransferase (391 aa).

Residues 20 to 21 and Glu-80 contribute to the N(1)-(5-phospho-beta-D-ribosyl)glycinamide site; that span reads EL. Residues Arg-112, Lys-153, 158-163, 193-196, and Glu-201 contribute to the ATP site; these read SSGKGQ and EGFI. An ATP-grasp domain is found at 117–306; it reads RLAAETLGLP…EFALHVRAIQ (190 aa). Residues Glu-265 and Glu-277 each contribute to the Mg(2+) site. N(1)-(5-phospho-beta-D-ribosyl)glycinamide is bound by residues Asp-284, Lys-354, and 361-362; that span reads RR.

Belongs to the PurK/PurT family. Homodimer.

The enzyme catalyses N(1)-(5-phospho-beta-D-ribosyl)glycinamide + formate + ATP = N(2)-formyl-N(1)-(5-phospho-beta-D-ribosyl)glycinamide + ADP + phosphate + H(+). It functions in the pathway purine metabolism; IMP biosynthesis via de novo pathway; N(2)-formyl-N(1)-(5-phospho-D-ribosyl)glycinamide from N(1)-(5-phospho-D-ribosyl)glycinamide (formate route): step 1/1. Functionally, involved in the de novo purine biosynthesis. Catalyzes the transfer of formate to 5-phospho-ribosyl-glycinamide (GAR), producing 5-phospho-ribosyl-N-formylglycinamide (FGAR). Formate is provided by PurU via hydrolysis of 10-formyl-tetrahydrofolate. This Shewanella baltica (strain OS185) protein is Formate-dependent phosphoribosylglycinamide formyltransferase.